The chain runs to 323 residues: Fructose-1,6-bisphosphatase class 1 (323 aa).

Mg(2+)-binding residues include Glu88, Asp107, Leu109, and Asp110. Substrate contacts are provided by residues 110–113 and Asn200; that span reads DGSS. Mg(2+) is bound at residue Glu272.

The protein belongs to the FBPase class 1 family. In terms of assembly, homotetramer. The cofactor is Mg(2+).

The protein resides in the cytoplasm. It catalyses the reaction beta-D-fructose 1,6-bisphosphate + H2O = beta-D-fructose 6-phosphate + phosphate. It participates in carbohydrate biosynthesis; gluconeogenesis. The protein is Fructose-1,6-bisphosphatase class 1 of Acinetobacter baumannii (strain ACICU).